The primary structure comprises 97 residues: Large ribosomal subunit protein eL21 (97 aa).

Residues 1 to 26 form a disordered region; sequence MQKSEGFRSKTRYKLQKHPRQKGMAP. The span at 9–21 shows a compositional bias: basic residues; sequence SKTRYKLQKHPRQ.

The protein belongs to the eukaryotic ribosomal protein eL21 family.

The protein is Large ribosomal subunit protein eL21 of Methanococcus maripaludis (strain C5 / ATCC BAA-1333).